The chain runs to 370 residues: Queuine tRNA-ribosyltransferase (370 aa).

Catalysis depends on Asp-93, which acts as the Proton acceptor. Substrate contacts are provided by residues 93–97, Asp-147, Gln-189, and Gly-216; that span reads DSGGF. The interval 247–253 is RNA binding; it reads GVGSPDC. Asp-266 acts as the Nucleophile in catalysis. The segment at 271–275 is RNA binding; important for wobble base 34 recognition; sequence TRIAR. Zn(2+)-binding residues include Cys-304, Cys-306, Cys-309, and His-335.

The protein belongs to the queuine tRNA-ribosyltransferase family. As to quaternary structure, homodimer. Within each dimer, one monomer is responsible for RNA recognition and catalysis, while the other monomer binds to the replacement base PreQ1. Zn(2+) serves as cofactor.

The catalysed reaction is 7-aminomethyl-7-carbaguanine + guanosine(34) in tRNA = 7-aminomethyl-7-carbaguanosine(34) in tRNA + guanine. Its pathway is tRNA modification; tRNA-queuosine biosynthesis. Functionally, catalyzes the base-exchange of a guanine (G) residue with the queuine precursor 7-aminomethyl-7-deazaguanine (PreQ1) at position 34 (anticodon wobble position) in tRNAs with GU(N) anticodons (tRNA-Asp, -Asn, -His and -Tyr). Catalysis occurs through a double-displacement mechanism. The nucleophile active site attacks the C1' of nucleotide 34 to detach the guanine base from the RNA, forming a covalent enzyme-RNA intermediate. The proton acceptor active site deprotonates the incoming PreQ1, allowing a nucleophilic attack on the C1' of the ribose to form the product. After dissociation, two additional enzymatic reactions on the tRNA convert PreQ1 to queuine (Q), resulting in the hypermodified nucleoside queuosine (7-(((4,5-cis-dihydroxy-2-cyclopenten-1-yl)amino)methyl)-7-deazaguanosine). This Desulforamulus reducens (strain ATCC BAA-1160 / DSM 100696 / MI-1) (Desulfotomaculum reducens) protein is Queuine tRNA-ribosyltransferase.